We begin with the raw amino-acid sequence, 880 residues long: Leucine--tRNA ligase (880 aa).

The 'HIGH' region motif lies at 46-56 (PYPSGALHMGH). Residues 638–642 (KMSKS) carry the 'KMSKS' region motif. Lys-641 contributes to the ATP binding site.

It belongs to the class-I aminoacyl-tRNA synthetase family.

It localises to the cytoplasm. It catalyses the reaction tRNA(Leu) + L-leucine + ATP = L-leucyl-tRNA(Leu) + AMP + diphosphate. The sequence is that of Leucine--tRNA ligase from Xanthomonas oryzae pv. oryzae (strain KACC10331 / KXO85).